The sequence spans 216 residues: Phosphoserine phosphatase (216 aa).

Asp10 acts as the Nucleophile in catalysis. The Mg(2+) site is built by Asp10 and Asp12. Residue Asp12 is the Proton donor of the active site. Residues Glu19, Arg55, 98-99 (SG), and Lys143 each bind substrate. Asp166 serves as a coordination point for Mg(2+). Asn169 is a binding site for substrate.

It belongs to the HAD-like hydrolase superfamily. SerB family. Mg(2+) is required as a cofactor.

The catalysed reaction is O-phospho-L-serine + H2O = L-serine + phosphate. The enzyme catalyses O-phospho-D-serine + H2O = D-serine + phosphate. It functions in the pathway amino-acid biosynthesis; L-serine biosynthesis; L-serine from 3-phospho-D-glycerate: step 3/3. The sequence is that of Phosphoserine phosphatase from Lactococcus lactis subsp. lactis (strain IL1403) (Streptococcus lactis).